The chain runs to 257 residues: Imidazole glycerol phosphate synthase subunit HisF (257 aa).

Catalysis depends on residues Asp12 and Asp131.

Belongs to the HisA/HisF family. As to quaternary structure, heterodimer of HisH and HisF.

It is found in the cytoplasm. The enzyme catalyses 5-[(5-phospho-1-deoxy-D-ribulos-1-ylimino)methylamino]-1-(5-phospho-beta-D-ribosyl)imidazole-4-carboxamide + L-glutamine = D-erythro-1-(imidazol-4-yl)glycerol 3-phosphate + 5-amino-1-(5-phospho-beta-D-ribosyl)imidazole-4-carboxamide + L-glutamate + H(+). Its pathway is amino-acid biosynthesis; L-histidine biosynthesis; L-histidine from 5-phospho-alpha-D-ribose 1-diphosphate: step 5/9. Functionally, IGPS catalyzes the conversion of PRFAR and glutamine to IGP, AICAR and glutamate. The HisF subunit catalyzes the cyclization activity that produces IGP and AICAR from PRFAR using the ammonia provided by the HisH subunit. In Paraburkholderia phytofirmans (strain DSM 17436 / LMG 22146 / PsJN) (Burkholderia phytofirmans), this protein is Imidazole glycerol phosphate synthase subunit HisF.